The primary structure comprises 457 residues: MILPTIAIIGRPNVGKSTLVNRLCQSNDAIVFDKPGVTRDRTYQNASWGGKEFQIVDTGGLVFDDDSEFLPEIRTQVFLALEEASLALLVVDGNQGVTDGDLSIAKWLRNSSCKTIVAVNKCESTTLGISLASEFWKLGLGEPNPVSAIHGSGTGDLLDLVIGELPENNIRDDEEKIMMSIIGRPNVGKSSLLNSICGEKRAIVSDISGTTTDSIDTLIKKGDNYWKIIDTAGIRRKKNVKYGTEFFGINRAFKSIDRSDVCVLVIDAVDGVTDQDQKLAGRIEEQGRACIIVVNKWDLVEKNSSTIYQVEKELRSKLYFLHWSKMIFISALTGQRVDNIFEHALNAVNQHRRRVTTSVVNEVLKESISWKSPPTKRSGKQGRLYYGTQVKNKPPTFTLFVNDPKLFGITYRRYIEKQIRLNLGFEGTPLILLWRGKQQRALNKEVERENIEVIQKD.

EngA-type G domains are found at residues 4-169 and 177-352; these read PTIA…PENN and IMMS…NQHR. Residues 10–17, 57–61, 120–123, 183–190, 230–234, and 295–298 each bind GTP; these read GRPNVGKS, DTGGL, NKCE, DTAGI, and NKWD. Residues 353–438 form the KH-like domain; it reads RRVTTSVVNE…PLILLWRGKQ (86 aa).

The protein belongs to the TRAFAC class TrmE-Era-EngA-EngB-Septin-like GTPase superfamily. EngA (Der) GTPase family. As to quaternary structure, associates with the 50S ribosomal subunit.

GTPase that plays an essential role in the late steps of ribosome biogenesis. In Prochlorococcus marinus (strain MIT 9215), this protein is GTPase Der.